A 117-amino-acid chain; its full sequence is Ribonuclease P protein component 4 (117 aa).

Residues C64, C67, C93, and C96 each contribute to the Zn(2+) site.

The protein belongs to the eukaryotic/archaeal RNase P protein component 4 family. In terms of assembly, consists of a catalytic RNA component and at least 4-5 protein subunits. The cofactor is Zn(2+).

Its subcellular location is the cytoplasm. The catalysed reaction is Endonucleolytic cleavage of RNA, removing 5'-extranucleotides from tRNA precursor.. Its function is as follows. Part of ribonuclease P, a protein complex that generates mature tRNA molecules by cleaving their 5'-ends. The chain is Ribonuclease P protein component 4 from Pyrococcus abyssi (strain GE5 / Orsay).